The sequence spans 108 residues: MLYPIFIFILAGLCEIGGGYLIWLWLREGQSSLVGLIGGAILMLYGVIATFQSFPSFGRVYAAYGGVFIIMSLIFAMVVDKQMPDKYDVIGAIICIVGVLVMLLPSRA.

4 helical membrane passes run 5–25 (IFIF…IWLW), 31–51 (SSLV…IATF), 60–80 (VYAA…MVVD), and 86–106 (KYDV…LLPS).

This sequence belongs to the UPF0060 family.

The protein localises to the cell membrane. The protein is UPF0060 membrane protein SA2130 of Staphylococcus aureus (strain N315).